Reading from the N-terminus, the 122-residue chain is Small ribosomal subunit protein uS13 (122 aa).

Residues 95 to 122 (GLPVRGQRTHTNARTRKGPAKPIAGKKK) form a disordered region.

The protein belongs to the universal ribosomal protein uS13 family. In terms of assembly, part of the 30S ribosomal subunit. Forms a loose heterodimer with protein S19. Forms two bridges to the 50S subunit in the 70S ribosome.

Functionally, located at the top of the head of the 30S subunit, it contacts several helices of the 16S rRNA. In the 70S ribosome it contacts the 23S rRNA (bridge B1a) and protein L5 of the 50S subunit (bridge B1b), connecting the 2 subunits; these bridges are implicated in subunit movement. Contacts the tRNAs in the A and P-sites. In Rhodospirillum rubrum (strain ATCC 11170 / ATH 1.1.1 / DSM 467 / LMG 4362 / NCIMB 8255 / S1), this protein is Small ribosomal subunit protein uS13.